A 190-amino-acid chain; its full sequence is Holliday junction branch migration complex subunit RuvA (190 aa).

A domain I region spans residues 1–64; sequence MIGKLTGTLL…EDAQLLYGFG (64 aa). The domain II stretch occupies residues 65–137; the sequence is TAQERQAFRE…LKGKLGADVG (73 aa). Residues 137 to 141 form a flexible linker region; that stretch reads GVRAH. Positions 142-190 are domain III; it reads AANDNQADILQALLALGYNDKEAAAALKALPADVGVSEGIKLALKSLSK.

Belongs to the RuvA family. As to quaternary structure, homotetramer. Forms an RuvA(8)-RuvB(12)-Holliday junction (HJ) complex. HJ DNA is sandwiched between 2 RuvA tetramers; dsDNA enters through RuvA and exits via RuvB. An RuvB hexamer assembles on each DNA strand where it exits the tetramer. Each RuvB hexamer is contacted by two RuvA subunits (via domain III) on 2 adjacent RuvB subunits; this complex drives branch migration. In the full resolvosome a probable DNA-RuvA(4)-RuvB(12)-RuvC(2) complex forms which resolves the HJ.

The protein localises to the cytoplasm. The RuvA-RuvB-RuvC complex processes Holliday junction (HJ) DNA during genetic recombination and DNA repair, while the RuvA-RuvB complex plays an important role in the rescue of blocked DNA replication forks via replication fork reversal (RFR). RuvA specifically binds to HJ cruciform DNA, conferring on it an open structure. The RuvB hexamer acts as an ATP-dependent pump, pulling dsDNA into and through the RuvAB complex. HJ branch migration allows RuvC to scan DNA until it finds its consensus sequence, where it cleaves and resolves the cruciform DNA. In Acidovorax sp. (strain JS42), this protein is Holliday junction branch migration complex subunit RuvA.